The primary structure comprises 142 residues: Putative pre-16S rRNA nuclease (142 aa).

It belongs to the YqgF nuclease family.

It localises to the cytoplasm. Its function is as follows. Could be a nuclease involved in processing of the 5'-end of pre-16S rRNA. The sequence is that of Putative pre-16S rRNA nuclease from Lactobacillus acidophilus (strain ATCC 700396 / NCK56 / N2 / NCFM).